Here is a 427-residue protein sequence, read N- to C-terminus: SAC3 domain-containing protein 1 (427 aa).

Composition is skewed to basic and acidic residues over residues 1–10 (MGRFKGENRS) and 117–127 (ADPKRTVKEYS). Disordered regions lie at residues 1 to 53 (MGRF…QDAV) and 101 to 143 (LHRL…LLRP). A compositionally biased stretch (pro residues) spans 134 to 143 (PRPPPSLLRP). In terms of domain architecture, PCI spans 229–397 (QVQEGFGSLR…EGLPPPGAYH (169 aa)). A Phosphoserine modification is found at Ser-425.

It belongs to the SAC3 family. As to quaternary structure, may be part of a SEM1-containing complex. As to expression, present in spleen cells (at protein level).

It localises to the cytoplasm. It is found in the cytoskeleton. The protein resides in the microtubule organizing center. The protein localises to the centrosome. Its subcellular location is the spindle. In terms of biological role, involved in centrosome duplication and mitotic progression. This chain is SAC3 domain-containing protein 1 (Sac3d1), found in Mus musculus (Mouse).